Consider the following 361-residue polypeptide: DNA replication and repair protein RecF (361 aa).

30–37 (GDNAQGKT) is an ATP binding site.

Belongs to the RecF family.

It localises to the cytoplasm. In terms of biological role, the RecF protein is involved in DNA metabolism; it is required for DNA replication and normal SOS inducibility. RecF binds preferentially to single-stranded, linear DNA. It also seems to bind ATP. The polypeptide is DNA replication and repair protein RecF (Clostridium botulinum (strain Eklund 17B / Type B)).